The following is a 394-amino-acid chain: Galactose-3-O-sulfotransferase 2 (394 aa).

At 1-8 (MWGSQHRS) the chain is on the cytoplasmic side. A helical; Signal-anchor for type II membrane protein transmembrane segment spans residues 9 to 29 (FQVALWFLVLAVFLLVGFLHV). Residues 30 to 394 (DFRLLIPDKV…TPKDIPFLKK (365 aa)) lie on the Lumenal side of the membrane. N-linked (GlcNAc...) asparagine glycosylation is found at N72, N176, N284, and N326.

It belongs to the galactose-3-O-sulfotransferase family.

The protein localises to the golgi apparatus. It localises to the golgi stack membrane. It functions in the pathway protein modification; carbohydrate sulfation. Its activity is regulated as follows. Strongly inhibited by Cu(2+) and Zn(2+). In terms of biological role, transfers a sulfate group to the hydroxyl group at C3 of non-reducing beta-galactosyl residues. Acts both on type 1 (Gal-beta-1,3-GlcNAc) and type 2 (Gal-beta-1,4-GlcNAc) chains with similar efficiency. This chain is Galactose-3-O-sulfotransferase 2 (Gal3st2), found in Mus musculus (Mouse).